We begin with the raw amino-acid sequence, 140 residues long: Transcription antitermination protein NusB (140 aa).

It belongs to the NusB family.

Its function is as follows. Involved in transcription antitermination. Required for transcription of ribosomal RNA (rRNA) genes. Binds specifically to the boxA antiterminator sequence of the ribosomal RNA (rrn) operons. The polypeptide is Transcription antitermination protein NusB (Sorangium cellulosum (strain So ce56) (Polyangium cellulosum (strain So ce56))).